The chain runs to 1312 residues: Kinesin-like protein KIF16B (1312 aa).

The 356-residue stretch at 3-358 (SVKVAVRVRP…LRYANRAKNI (356 aa)) folds into the Kinesin motor domain. 102–109 (GQTGSGKS) contributes to the ATP binding site. Residues 366 to 425 (EDANVKLIRELRAEIARLKTLLAQGNQIALLDSPTALSMEEKLHQNEARVQELTKEWTNK) are a coiled coil. The residue at position 398 (Ser398) is a Phosphoserine. In terms of domain architecture, FHA spans 480–544 (VGREDASTEQ…LNQGAVILLG (65 aa)). Position 577 is a phosphothreonine (Thr577). Phosphoserine occurs at positions 582, 838, 1047, and 1145. Coiled coils occupy residues 835-913 (KLAS…LQNH) and 941-1073 (QVEK…KQKI). Positions 1177 to 1291 (DPIKISIPRY…KVGLTLSKHT (115 aa)) constitute a PX domain.

Belongs to the TRAFAC class myosin-kinesin ATPase superfamily. Kinesin family. As to quaternary structure, interacts with PTPN21. Interacts with RAB14.

The protein localises to the cytoplasm. It is found in the cytoskeleton. Its subcellular location is the early endosome membrane. It localises to the spindle. In terms of biological role, plus end-directed microtubule-dependent motor protein involved in endosome transport and receptor recycling and degradation. Regulates the plus end motility of early endosomes and the balance between recycling and degradation of receptors such as EGF receptor (EGFR) and FGF receptor (FGFR). Regulates the Golgi to endosome transport of FGFR-containing vesicles during early development, a key process for developing basement membrane and epiblast and primitive endoderm lineages during early postimplantation development. The polypeptide is Kinesin-like protein KIF16B (Kif16b) (Mus musculus (Mouse)).